We begin with the raw amino-acid sequence, 249 residues long: Secreted flagellin C (249 aa).

Post-translationally, the secreted form is about 1 kDa larger than the whole cell lysate form, presumably due to post-translational modification. A 22 kDa form is also found in the secreted fraction, probably resulting from proteolysis.

Its subcellular location is the secreted. It localises to the host cell surface. Functionally, plays a role in virulence. This chain is Secreted flagellin C (flaC), found in Campylobacter jejuni subsp. jejuni serotype O:2 (strain ATCC 700819 / NCTC 11168).